Reading from the N-terminus, the 205-residue chain is Large ribosomal subunit protein uL4 (205 aa).

The segment at 45 to 97 (RQGTSAVKNRSAVRGGGKKPWRQKGTGRARQGSIRAPQWRGGGTVFGPTPRSY) is disordered. The segment covering 60 to 71 (GGKKPWRQKGTG) has biased composition (basic residues).

The protein belongs to the universal ribosomal protein uL4 family. As to quaternary structure, part of the 50S ribosomal subunit.

One of the primary rRNA binding proteins, this protein initially binds near the 5'-end of the 23S rRNA. It is important during the early stages of 50S assembly. It makes multiple contacts with different domains of the 23S rRNA in the assembled 50S subunit and ribosome. Its function is as follows. Forms part of the polypeptide exit tunnel. The chain is Large ribosomal subunit protein uL4 from Lactobacillus johnsonii (strain CNCM I-12250 / La1 / NCC 533).